The primary structure comprises 129 residues: Glycine cleavage system H protein (129 aa).

One can recognise a Lipoyl-binding domain in the interval 24–106 (LVRIGISAFA…HGEGWLLLVK (83 aa)). K65 carries the post-translational modification N6-lipoyllysine.

Belongs to the GcvH family. As to quaternary structure, the glycine cleavage system is composed of four proteins: P, T, L and H. It depends on (R)-lipoate as a cofactor.

Its function is as follows. The glycine cleavage system catalyzes the degradation of glycine. The H protein shuttles the methylamine group of glycine from the P protein to the T protein. In Prochlorococcus marinus (strain SARG / CCMP1375 / SS120), this protein is Glycine cleavage system H protein.